The sequence spans 447 residues: Trigger factor (447 aa).

The PPIase FKBP-type domain maps to 164-249; that stretch reads GDLVVIDFIG…VKEVKQAVVP (86 aa).

It belongs to the FKBP-type PPIase family. Tig subfamily.

The protein resides in the cytoplasm. It catalyses the reaction [protein]-peptidylproline (omega=180) = [protein]-peptidylproline (omega=0). Functionally, involved in protein export. Acts as a chaperone by maintaining the newly synthesized protein in an open conformation. Functions as a peptidyl-prolyl cis-trans isomerase. This Rhodospirillum rubrum (strain ATCC 11170 / ATH 1.1.1 / DSM 467 / LMG 4362 / NCIMB 8255 / S1) protein is Trigger factor.